A 1015-amino-acid polypeptide reads, in one-letter code: DNA polymerase catalytic subunit (1015 aa).

It belongs to the DNA polymerase type-B family. As to quaternary structure, forms a complex with the major DNA-binding protein BALF2, the DNA polymerase processivity factor BMRF1, and the alkaline exonuclease BGLF5. Interacts with the putative helicase-primase complex composed of BBLF4, BSLF1 and BBLF2/3 proteins; these interactions may coordinate leading and lagging strand DNA synthesis at the replication fork.

Its subcellular location is the host nucleus. It carries out the reaction DNA(n) + a 2'-deoxyribonucleoside 5'-triphosphate = DNA(n+1) + diphosphate. Functionally, replicates viral genomic DNA in the late phase of lytic infection, producing long concatemeric DNA. The replication complex is composed of six viral proteins: the DNA polymerase, processivity factor, primase, primase-associated factor, helicase, and ssDNA-binding protein. The polypeptide is DNA polymerase catalytic subunit (Homo sapiens (Human)).